Consider the following 435-residue polypeptide: Homogentisate 1,2-dioxygenase (435 aa).

H289 functions as the Proton acceptor in the catalytic mechanism. Residues H332 and E338 each contribute to the Fe cation site. The homogentisate site is built by Y347 and H368. H368 contributes to the Fe cation binding site.

This sequence belongs to the homogentisate dioxygenase family. As to quaternary structure, hexamer; dimer of trimers. The cofactor is Fe cation.

The enzyme catalyses homogentisate + O2 = 4-maleylacetoacetate + H(+). The protein operates within amino-acid degradation; L-phenylalanine degradation; acetoacetate and fumarate from L-phenylalanine: step 4/6. In terms of biological role, involved in the catabolism of homogentisate (2,5-dihydroxyphenylacetate or 2,5-OH-PhAc), a central intermediate in the degradation of phenylalanine and tyrosine. Catalyzes the oxidative ring cleavage of the aromatic ring of homogentisate to yield maleylacetoacetate. This Pseudomonas savastanoi pv. phaseolicola (strain 1448A / Race 6) (Pseudomonas syringae pv. phaseolicola (strain 1448A / Race 6)) protein is Homogentisate 1,2-dioxygenase.